The following is a 246-amino-acid chain: Major prion protein (246 aa).

The signal sequence occupies residues 1–15 (MLVLFVATWSDLGLC). The interaction with GRB2, ERI3 and SYN1 stretch occupies residues 16-223 (KKRPKPGGWN…ESQAYYQRGS (208 aa)). The tract at residues 18 to 102 (RPKPGGWNTG…HKPSKPKTSM (85 aa)) is disordered. 5 consecutive repeat copies span residues 44 to 52 (PQGGGGWGQ), 53 to 60 (PHGGGWGQ), 61 to 68 (PHGGGWGQ), 69 to 76 (PHGGGWGQ), and 77 to 84 (PHGGGWGQ). Positions 44–84 (PQGGGGWGQPHGGGWGQPHGGGWGQPHGGGWGQPHGGGWGQ) are 5 X 8 AA tandem repeats of P-H-G-G-G-W-G-Q. Over residues 45–88 (QGGGGWGQPHGGGWGQPHGGGWGQPHGGGWGQPHGGGWGQGGGT) the composition is skewed to gly residues. Residues His-54, Gly-55, Gly-56, His-62, Gly-63, Gly-64, His-70, Gly-71, Gly-72, His-78, Gly-79, and Gly-80 each coordinate Cu(2+). A compositionally biased stretch (basic residues) spans 91-102 (QWHKPSKPKTSM). An intrachain disulfide couples Cys-172 to Cys-207. Residues Asn-174 and Asn-190 are each glycosylated (N-linked (GlcNAc...) asparagine). Ser-223 is lipidated: GPI-anchor amidated serine. The propeptide at 224 to 246 (SMVLFSSPPVILLISFLIFLIVG) is removed in mature form.

This sequence belongs to the prion family. Monomer and homodimer. Has a tendency to aggregate into amyloid fibrils containing a cross-beta spine, formed by a steric zipper of superposed beta-strands. Soluble oligomers may represent an intermediate stage on the path to fibril formation. Copper binding may promote oligomerization. Interacts with GRB2, APP, ERI3/PRNPIP and SYN1. Mislocalized cytosolically exposed PrP interacts with MGRN1; this interaction alters MGRN1 subcellular location and causes lysosomal enlargement. Interacts with KIAA1191.

It localises to the cell membrane. It is found in the golgi apparatus. In terms of biological role, its primary physiological function is unclear. Has cytoprotective activity against internal or environmental stresses. May play a role in neuronal development and synaptic plasticity. May be required for neuronal myelin sheath maintenance. May play a role in iron uptake and iron homeostasis. Soluble oligomers are toxic to cultured neuroblastoma cells and induce apoptosis (in vitro). Association with GPC1 (via its heparan sulfate chains) targets PRNP to lipid rafts. Also provides Cu(2+) or Zn(2+) for the ascorbate-mediated GPC1 deaminase degradation of its heparan sulfate side chains. The protein is Major prion protein (PRNP) of Cercocebus atys (Sooty mangabey).